The chain runs to 394 residues: Bifunctional enzyme Fae/Hps (394 aa).

Residues Met1 to Phe162 form a formaldehyde-activating enzyme region. Residue His18 is the Proton donor of the active site. Residues Asp20, Leu49, Lys67, Thr69, and Gln84 each contribute to the substrate site. Positions Val163–Phe394 are 3-hexulose-6-phosphate synthase.

This sequence in the N-terminal section; belongs to the formaldehyde-activating enzyme family. In the C-terminal section; belongs to the HPS/KGPDC family. HPS subfamily.

The catalysed reaction is 5,6,7,8-tetrahydromethanopterin + formaldehyde = 5,10-methylenetetrahydromethanopterin + H2O. The enzyme catalyses D-ribulose 5-phosphate + formaldehyde = D-arabino-hex-3-ulose 6-phosphate. Its pathway is carbohydrate biosynthesis; D-ribose 5-phosphate biosynthesis. Functionally, catalyzes the condensation of formaldehyde with tetrahydromethanopterin (H(4)MPT) to 5,10-methylenetetrahydromethanopterin. In terms of biological role, catalyzes the reversible formation of ribulose-5-phosphate and formaldehyde from 3-hexulose-6-phosphate. The polypeptide is Bifunctional enzyme Fae/Hps (Archaeoglobus fulgidus (strain ATCC 49558 / DSM 4304 / JCM 9628 / NBRC 100126 / VC-16)).